Here is a 364-residue protein sequence, read N- to C-terminus: 1-acyl-sn-glycerol-3-phosphate acyltransferase epsilon (364 aa).

A run of 2 helical transmembrane segments spans residues 15–35 and 61–81; these read LLPS…WGVW and MVLF…GDLP. Positions 93 to 98 match the HXXXXD motif motif; sequence HQSTVD. The helical transmembrane segment at 344–364 threads the bilayer; that stretch reads LYVNTWIYGTLLGCLWVTIKA.

It belongs to the 1-acyl-sn-glycerol-3-phosphate acyltransferase family. Widely expressed.

It localises to the endoplasmic reticulum membrane. The protein resides in the nucleus envelope. The protein localises to the mitochondrion. It catalyses the reaction a 1-acyl-sn-glycero-3-phosphate + an acyl-CoA = a 1,2-diacyl-sn-glycero-3-phosphate + CoA. The catalysed reaction is 1-(9Z-octadecenoyl)-sn-glycero-3-phosphate + tetradecanoyl-CoA = 1-(9Z)-octadecenoyl-2-tetradecanoyl-sn-glycero-3-phosphate + CoA. It carries out the reaction pentadecanoyl-CoA + 1-(9Z-octadecenoyl)-sn-glycero-3-phosphate = 1-(9Z)-octadecenoyl-2-pentadecanoyl-sn-glycero-3-phosphate + CoA. The enzyme catalyses 1-(9Z-octadecenoyl)-sn-glycero-3-phosphate + octadecanoyl-CoA = 1-(9Z-octadecenoyl)-2-octadecanoyl-sn-glycero-3-phosphate + CoA. It catalyses the reaction nonadecanoyl-CoA + 1-(9Z-octadecenoyl)-sn-glycero-3-phosphate = 1-(9Z)-octadecenoyl-2-nonadecanoyl-sn-glycero-3-phosphate + CoA. The catalysed reaction is 1-(9Z-octadecenoyl)-sn-glycero-3-phosphoethanolamine + (9Z)-octadecenoyl-CoA = 1,2-di-(9Z-octadecenoyl)-sn-glycero-3-phosphoethanolamine + CoA. It carries out the reaction 1-(9Z-octadecenoyl)-sn-glycero-3-phosphocholine + (9Z)-octadecenoyl-CoA = 1,2-di-(9Z-octadecenoyl)-sn-glycero-3-phosphocholine + CoA. The enzyme catalyses 1-(9Z-octadecenoyl)-sn-glycero-3-phospho-(1D-myo-inositol) + (5Z,8Z,11Z,14Z)-eicosatetraenoyl-CoA = 1-(9Z-octadecenoyl)-2-(5Z,8Z,11Z,14Z-eicosatetraenoyl)-sn-glycero-3-phospho-1D-myo-inositol + CoA. It catalyses the reaction 1-(9Z-octadecenoyl)-sn-glycero-3-phospho-L-serine + (9Z)-octadecenoyl-CoA = 1,2-di-(9Z)-octadecenoyl-sn-glycero-3-phospho-L-serine + CoA. The catalysed reaction is 1-(9Z-octadecenoyl)-sn-glycero-3-phospho-L-serine + (5Z,8Z,11Z,14Z)-eicosatetraenoyl-CoA = 1-(9Z-octadecenoyl)-2-(5Z,8Z,11Z,14Z-eicosatetraenoyl)-sn-glycero-3-phospho-L-serine + CoA. It carries out the reaction 1-hexadecanoyl-sn-glycero-3-phosphate + (9Z)-octadecenoyl-CoA = 1-hexadecanoyl-2-(9Z-octadecenoyl)-sn-glycero-3-phosphate + CoA. The enzyme catalyses 1-heptadecanoyl-sn-glycero-3-phosphate + (9Z)-octadecenoyl-CoA = 1-heptadecanoyl-2-(9Z)-octadecenoyl-sn-glycero-3-phosphate + CoA. It catalyses the reaction 1-(5Z,8Z,11Z,14Z-eicosatetraenoyl)-sn-glycero-3-phosphate + (9Z)-octadecenoyl-CoA = 1-(5Z,8Z,11Z,14Z)-eicosatetraenoyl-2-(9Z)-octadecenoyl-sn-glycero-3-phosphate + CoA. The catalysed reaction is 1-octadecanoyl-sn-glycero-3-phosphate + (9Z)-octadecenoyl-CoA = 1-octadecanoyl-2-(9Z-octadecenoyl)-sn-glycero-3-phosphate + CoA. It carries out the reaction 1-(9Z-octadecenoyl)-sn-glycero-3-phosphate + (5Z,8Z,11Z,14Z)-eicosatetraenoyl-CoA = 1-(9Z)-octadecenoyl-2-(5Z,8Z,11Z,14Z)-eicosatetraenoyl-sn-glycero-3-phosphate + CoA. The enzyme catalyses heptadecanoyl-CoA + 1-(9Z-octadecenoyl)-sn-glycero-3-phosphate = 1-(9Z)-octadecenoyl-2-heptadecanoyl-sn-glycero-3-phosphate + CoA. It catalyses the reaction 1-(9Z-octadecenoyl)-sn-glycero-3-phosphocholine + (5Z,8Z,11Z,14Z)-eicosatetraenoyl-CoA = 1-(9Z)-octadecenoyl-2-(5Z,8Z,11Z,14Z)-icosatetraenoyl-sn-glycero-3-phosphocholine + CoA. The catalysed reaction is 1-(9Z-octadecenoyl)-sn-glycero-3-phosphate + (9Z)-octadecenoyl-CoA = 1,2-di-(9Z-octadecenoyl)-sn-glycero-3-phosphate + CoA. It carries out the reaction 1-(9Z-octadecenoyl)-sn-glycero-3-phosphate + hexadecanoyl-CoA = 1-hexadecanoyl-2-(9Z-octadecenoyl)-sn-glycero-3-phosphate + CoA. The protein operates within phospholipid metabolism; CDP-diacylglycerol biosynthesis; CDP-diacylglycerol from sn-glycerol 3-phosphate: step 2/3. Its function is as follows. Converts 1-acyl-sn-glycerol-3-phosphate (lysophosphatidic acid or LPA) into 1,2-diacyl-sn-glycerol-3-phosphate (phosphatidic acid or PA) by incorporating an acyl moiety at the sn-2 position of the glycerol backbone. Acts on LPA containing saturated or unsaturated fatty acids C15:0-C20:4 at the sn-1 position using C18:1-CoA as the acyl donor. Also acts on lysophosphatidylethanolamine using oleoyl-CoA, but not arachidonoyl-CoA, and lysophosphatidylinositol using arachidonoyl-CoA, but not oleoyl-CoA. Activity toward lysophosphatidylglycerol not detectable. This Homo sapiens (Human) protein is 1-acyl-sn-glycerol-3-phosphate acyltransferase epsilon (AGPAT5).